The chain runs to 122 residues: Large ribosomal subunit protein uL14 (122 aa).

It belongs to the universal ribosomal protein uL14 family. Part of the 50S ribosomal subunit. Forms a cluster with proteins L3 and L19. In the 70S ribosome, L14 and L19 interact and together make contacts with the 16S rRNA in bridges B5 and B8.

Binds to 23S rRNA. Forms part of two intersubunit bridges in the 70S ribosome. In Finegoldia magna (strain ATCC 29328 / DSM 20472 / WAL 2508) (Peptostreptococcus magnus), this protein is Large ribosomal subunit protein uL14.